The following is a 372-amino-acid chain: 4-hydroxy-3-methylbut-2-en-1-yl diphosphate synthase (flavodoxin) (372 aa).

[4Fe-4S] cluster-binding residues include cysteine 270, cysteine 273, cysteine 305, and glutamate 312.

Belongs to the IspG family. [4Fe-4S] cluster is required as a cofactor.

It catalyses the reaction (2E)-4-hydroxy-3-methylbut-2-enyl diphosphate + oxidized [flavodoxin] + H2O + 2 H(+) = 2-C-methyl-D-erythritol 2,4-cyclic diphosphate + reduced [flavodoxin]. It functions in the pathway isoprenoid biosynthesis; isopentenyl diphosphate biosynthesis via DXP pathway; isopentenyl diphosphate from 1-deoxy-D-xylulose 5-phosphate: step 5/6. Its function is as follows. Converts 2C-methyl-D-erythritol 2,4-cyclodiphosphate (ME-2,4cPP) into 1-hydroxy-2-methyl-2-(E)-butenyl 4-diphosphate. The chain is 4-hydroxy-3-methylbut-2-en-1-yl diphosphate synthase (flavodoxin) from Salmonella paratyphi B (strain ATCC BAA-1250 / SPB7).